Here is a 562-residue protein sequence, read N- to C-terminus: Potassium-transporting ATPase potassium-binding subunit (562 aa).

Helical transmembrane passes span Phe-6–Phe-26, Ala-63–Met-83, Gly-132–Ile-152, Leu-175–Leu-195, Phe-253–Val-273, Leu-283–Leu-303, Phe-327–Val-347, Ala-356–Val-376, Gly-379–Gly-399, Met-416–Leu-436, Leu-483–Ile-503, and Leu-526–Ala-546.

Belongs to the KdpA family. The system is composed of three essential subunits: KdpA, KdpB and KdpC.

It is found in the cell inner membrane. Part of the high-affinity ATP-driven potassium transport (or Kdp) system, which catalyzes the hydrolysis of ATP coupled with the electrogenic transport of potassium into the cytoplasm. This subunit binds the periplasmic potassium ions and delivers the ions to the membrane domain of KdpB through an intramembrane tunnel. In Yersinia enterocolitica serotype O:8 / biotype 1B (strain NCTC 13174 / 8081), this protein is Potassium-transporting ATPase potassium-binding subunit.